The primary structure comprises 209 residues: uncharacterized protein (209 aa).

Disordered regions lie at residues 1 to 80 (MFVR…PPVE) and 164 to 197 (LPAG…PGME). The span at 178-189 (SRGSSRSSCSQR) shows a compositional bias: low complexity.

This is an uncharacterized protein from Homo sapiens (Human).